A 309-amino-acid polypeptide reads, in one-letter code: METEAEVIPIWQNKPHGSTRSVVRRIGSTLPLKPCPRACFQELPGLPSMRSLDGPLVPTLADIAWIADDEEETYARVRSDTRPLRHEWRPTPLLVMHRNSSVPNFRREGRRVEGLRKPGVTALNRTTALQDELSRLRAQIAKIVAADSDSNPITPDLLSPDDTSMGFSMAPFETAAYQPPPTASFVISDVTEEDEEEEEEEDREEEEEDVSELVPDPMPPVSMTASATFDLDRPTMDFREPEEDTVSLSKSTSFADVMDMLKDMNRLKMSKDRYNRGCTSLREEDSASLISEALRKKFVLKDDDISMRK.

The disordered stretch occupies residues 189-221; it reads DVTEEDEEEEEEEDREEEEEDVSELVPDPMPPV. Residues 190–211 show a composition bias toward acidic residues; that stretch reads VTEEDEEEEEEEDREEEEEDVS. Ser-253 carries the post-translational modification Phosphoserine.

It belongs to the MTFR1 family.

Its subcellular location is the mitochondrion outer membrane. Functionally, mitochondrial protein required for adaptation of miochondrial dynamics to metabolic changes. Regulates mitochondrial morphology at steady state and mediates AMPK-dependent stress-induced mitochondrial fragmentation via the control of OPA1 levels. The sequence is that of Mitochondrial fission regulator 1-like (mtfr1l) from Danio rerio (Zebrafish).